The sequence spans 85 residues: Small ribosomal subunit protein uS17 (85 aa).

Belongs to the universal ribosomal protein uS17 family. Part of the 30S ribosomal subunit.

Functionally, one of the primary rRNA binding proteins, it binds specifically to the 5'-end of 16S ribosomal RNA. In Agathobacter rectalis (strain ATCC 33656 / DSM 3377 / JCM 17463 / KCTC 5835 / VPI 0990) (Eubacterium rectale), this protein is Small ribosomal subunit protein uS17.